A 131-amino-acid polypeptide reads, in one-letter code: Putative pre-16S rRNA nuclease (131 aa).

Belongs to the YqgF nuclease family.

It localises to the cytoplasm. In terms of biological role, could be a nuclease involved in processing of the 5'-end of pre-16S rRNA. This Bordetella avium (strain 197N) protein is Putative pre-16S rRNA nuclease.